A 149-amino-acid polypeptide reads, in one-letter code: Protein AIM7 (149 aa).

Residue serine 2 is modified to N-acetylserine. Positions 3–147 constitute an ADF-H domain; sequence NLYKIGTETR…DVEELREQLE (145 aa). Phosphoserine is present on serine 137.

This sequence belongs to the actin-binding proteins ADF family. GMF subfamily.

The protein resides in the cytoplasm. The protein localises to the nucleus. Functionally, may be involved in mitochondrial organization and biogenesis. The sequence is that of Protein AIM7 (AIM7) from Saccharomyces cerevisiae (strain ATCC 204508 / S288c) (Baker's yeast).